The primary structure comprises 586 residues: Terminase, large subunit (586 aa).

Residues 1-229 form an ATPase activity region; that stretch reads MSTQSNRNAL…TIIWPALYPR (229 aa). Residues 58–65 carry the Walker A motif motif; it reads AFRGIGKS. Residues 156–161 carry the Walker B motif motif; the sequence is IIIADD. Residues 344 to 429 form a nuclease activity region; sequence HSYHSCSQNT…ESNFGDGMFG (86 aa). Residues aspartate 364, glutamate 420, and aspartate 518 each coordinate Mg(2+). An involved in prohead binding region spans residues 571 to 586; that stretch reads LYWEDDDVNGDRFINW.

It belongs to the Teseptimavirus large terminase family. As to quaternary structure, homopentamer. Interacts with the terminase small subunit; the active complex is probably heterooligomeric. Interacts with the portal protein. Mg(2+) is required as a cofactor.

In terms of biological role, the terminase large subunit acts as an ATP driven molecular motor necessary for viral DNA translocation into empty capsids and as an endonuclease that cuts the viral genome at a unique and precise dsDNA sequence to initiate and to end a packaging reaction. The terminase lies at a unique vertex of the procapsid and is composed of two subunits, a small terminase subunit involved in viral DNA recognition (packaging sequence), and a large terminase subunit possessing endonucleolytic and ATPase activities. Both terminase subunits heterooligomerize and are docked on the portal protein to form the packaging machine. The terminase large subunit exhibits endonuclease activity and cleaves the viral genome concatemer. Once the DNA is packaged, the terminase detaches from the connector and gets replaced by the tail to finish maturation of the virion. The protein is Terminase, large subunit (19) of Escherichia coli (Bacteriophage T3).